A 504-amino-acid chain; its full sequence is Aspartyl/glutamyl-tRNA(Asn/Gln) amidotransferase subunit B (504 aa).

It belongs to the GatB/GatE family. GatB subfamily. Heterotrimer of A, B and C subunits.

It carries out the reaction L-glutamyl-tRNA(Gln) + L-glutamine + ATP + H2O = L-glutaminyl-tRNA(Gln) + L-glutamate + ADP + phosphate + H(+). The enzyme catalyses L-aspartyl-tRNA(Asn) + L-glutamine + ATP + H2O = L-asparaginyl-tRNA(Asn) + L-glutamate + ADP + phosphate + 2 H(+). In terms of biological role, allows the formation of correctly charged Asn-tRNA(Asn) or Gln-tRNA(Gln) through the transamidation of misacylated Asp-tRNA(Asn) or Glu-tRNA(Gln) in organisms which lack either or both of asparaginyl-tRNA or glutaminyl-tRNA synthetases. The reaction takes place in the presence of glutamine and ATP through an activated phospho-Asp-tRNA(Asn) or phospho-Glu-tRNA(Gln). The chain is Aspartyl/glutamyl-tRNA(Asn/Gln) amidotransferase subunit B from Rhodococcus opacus (strain B4).